The following is a 4250-amino-acid chain: Dynein axonemal heavy chain 1 (4250 aa).

A disordered region spans residues 1–73 (MEECNKEGPS…KSPLTGTDKK (73 aa)). The segment at 1–1527 (MEECNKEGPS…YIRAVNAEFI (1527 aa)) is stem. The span at 24-42 (PESHDLEKILQESNYHPER) shows a compositional bias: basic and acidic residues. A compositionally biased stretch (pro residues) spans 46–55 (NPDPKTPPLP). 4 AAA regions span residues 1528–1749 (YGYE…VISA), 1809–2042 (QAIR…NTVK), 2174–2434 (TMMP…VFQG), and 2532–2784 (DYNQ…LARH). Positions 1566 to 1573 (GPAGTGKT) match the GPAGTGKT motif motif. ATP is bound at residue 1566 to 1573 (GPAGTGKT). The CFDEFNR motif motif lies at 1616–1622 (CFDEFNR). Residues 1847-1854 (GPTGSGKS), 2212-2219 (GPTGTGKT), and 2571-2578 (GVGGSGRS) contribute to the ATP site. The stalk stretch occupies residues 2799 to 3097 (FSILIGQKKM…EELEMKCEQC (299 aa)). A coiled-coil region spans residues 3045–3128 (LREAQDDLEV…QETVENLENM (84 aa)). 2 AAA regions span residues 3182–3412 (LGNP…EIQA) and 3625–3844 (MQDF…QLKM).

It belongs to the dynein heavy chain family. As to quaternary structure, consists of at least two heavy chains and a number of intermediate and light chains.

The protein localises to the cytoplasm. It is found in the cytoskeleton. Its subcellular location is the cilium axoneme. It localises to the cell projection. The protein resides in the cilium. The protein localises to the flagellum. Functionally, force generating protein of cilia required for sperm flagellum motility. Produces force towards the minus ends of microtubules. Dynein has ATPase activity; the force-producing power stroke is thought to occur on release of ADP. Required in spermatozoa for the formation of the inner dynein arms and biogenesis of the axoneme. This is Dynein axonemal heavy chain 1 from Mus musculus (Mouse).